Here is a 258-residue protein sequence, read N- to C-terminus: Pyridoxine 5'-phosphate synthase (258 aa).

3-amino-2-oxopropyl phosphate is bound at residue asparagine 6. Aspartate 8–histidine 9 is a 1-deoxy-D-xylulose 5-phosphate binding site. 3-amino-2-oxopropyl phosphate is bound at residue arginine 17. Histidine 42 serves as the catalytic Proton acceptor. The 1-deoxy-D-xylulose 5-phosphate site is built by arginine 44 and histidine 49. The active-site Proton acceptor is the glutamate 69. Threonine 99 contributes to the 1-deoxy-D-xylulose 5-phosphate binding site. Histidine 213 serves as the catalytic Proton donor. 3-amino-2-oxopropyl phosphate is bound by residues glycine 214 and glycine 235 to glutamine 236.

This sequence belongs to the PNP synthase family. As to quaternary structure, homooctamer; tetramer of dimers.

The protein localises to the cytoplasm. The catalysed reaction is 3-amino-2-oxopropyl phosphate + 1-deoxy-D-xylulose 5-phosphate = pyridoxine 5'-phosphate + phosphate + 2 H2O + H(+). It functions in the pathway cofactor biosynthesis; pyridoxine 5'-phosphate biosynthesis; pyridoxine 5'-phosphate from D-erythrose 4-phosphate: step 5/5. Its function is as follows. Catalyzes the complicated ring closure reaction between the two acyclic compounds 1-deoxy-D-xylulose-5-phosphate (DXP) and 3-amino-2-oxopropyl phosphate (1-amino-acetone-3-phosphate or AAP) to form pyridoxine 5'-phosphate (PNP) and inorganic phosphate. This Sulfurovum sp. (strain NBC37-1) protein is Pyridoxine 5'-phosphate synthase.